Reading from the N-terminus, the 125-residue chain is Small ribosomal subunit protein eS6 (125 aa).

It belongs to the eukaryotic ribosomal protein eS6 family.

The polypeptide is Small ribosomal subunit protein eS6 (Pyrococcus horikoshii (strain ATCC 700860 / DSM 12428 / JCM 9974 / NBRC 100139 / OT-3)).